The sequence spans 421 residues: Histidine--tRNA ligase (421 aa).

This sequence belongs to the class-II aminoacyl-tRNA synthetase family. As to quaternary structure, homodimer.

Its subcellular location is the cytoplasm. The enzyme catalyses tRNA(His) + L-histidine + ATP = L-histidyl-tRNA(His) + AMP + diphosphate + H(+). The protein is Histidine--tRNA ligase of Natranaerobius thermophilus (strain ATCC BAA-1301 / DSM 18059 / JW/NM-WN-LF).